A 103-amino-acid polypeptide reads, in one-letter code: Large ribosomal subunit protein bL21 (103 aa).

This sequence belongs to the bacterial ribosomal protein bL21 family. As to quaternary structure, part of the 50S ribosomal subunit. Contacts protein L20.

This protein binds to 23S rRNA in the presence of protein L20. In Lactobacillus johnsonii (strain CNCM I-12250 / La1 / NCC 533), this protein is Large ribosomal subunit protein bL21.